A 364-amino-acid polypeptide reads, in one-letter code: tRNA N6-adenosine threonylcarbamoyltransferase (364 aa).

Residues H115 and H119 each contribute to the Fe cation site. Substrate is bound by residues 137 to 141 (LVSGG), D170, G183, and N288. D316 provides a ligand contact to Fe cation.

The protein belongs to the KAE1 / TsaD family. Requires Fe(2+) as cofactor.

The protein localises to the cytoplasm. It carries out the reaction L-threonylcarbamoyladenylate + adenosine(37) in tRNA = N(6)-L-threonylcarbamoyladenosine(37) in tRNA + AMP + H(+). Its function is as follows. Required for the formation of a threonylcarbamoyl group on adenosine at position 37 (t(6)A37) in tRNAs that read codons beginning with adenine. Is involved in the transfer of the threonylcarbamoyl moiety of threonylcarbamoyl-AMP (TC-AMP) to the N6 group of A37, together with TsaE and TsaB. TsaD likely plays a direct catalytic role in this reaction. The protein is tRNA N6-adenosine threonylcarbamoyltransferase of Bartonella bacilliformis (strain ATCC 35685 / KC583 / Herrer 020/F12,63).